A 626-amino-acid polypeptide reads, in one-letter code: tRNA uridine 5-carboxymethylaminomethyl modification enzyme MnmG (626 aa).

FAD is bound at residue 14-19 (GAGHAG). 273-287 (GPRYCPSIEDKVVRF) is a binding site for NAD(+).

Belongs to the MnmG family. Homodimer. Heterotetramer of two MnmE and two MnmG subunits. Requires FAD as cofactor.

The protein localises to the cytoplasm. Functionally, NAD-binding protein involved in the addition of a carboxymethylaminomethyl (cmnm) group at the wobble position (U34) of certain tRNAs, forming tRNA-cmnm(5)s(2)U34. In Caldicellulosiruptor saccharolyticus (strain ATCC 43494 / DSM 8903 / Tp8T 6331), this protein is tRNA uridine 5-carboxymethylaminomethyl modification enzyme MnmG.